Reading from the N-terminus, the 194-residue chain is Fe/S biogenesis protein NfuA (194 aa).

[4Fe-4S] cluster contacts are provided by cysteine 151 and cysteine 154.

This sequence belongs to the NfuA family. In terms of assembly, homodimer. [4Fe-4S] cluster is required as a cofactor.

Its function is as follows. Involved in iron-sulfur cluster biogenesis. Binds a 4Fe-4S cluster, can transfer this cluster to apoproteins, and thereby intervenes in the maturation of Fe/S proteins. Could also act as a scaffold/chaperone for damaged Fe/S proteins. This is Fe/S biogenesis protein NfuA from Actinobacillus succinogenes (strain ATCC 55618 / DSM 22257 / CCUG 43843 / 130Z).